Consider the following 163-residue polypeptide: Xanthine-guanine phosphoribosyltransferase (163 aa).

Residues 43–44 (RG) and 95–103 (DDLADTGGT) contribute to the 5-phospho-alpha-D-ribose 1-diphosphate site. Mg(2+) is bound at residue aspartate 96. 2 residues coordinate guanine: aspartate 99 and isoleucine 142. Aspartate 99 and isoleucine 142 together coordinate xanthine. GMP is bound by residues 99 to 103 (DTGGT) and 141 to 142 (WI).

This sequence belongs to the purine/pyrimidine phosphoribosyltransferase family. XGPT subfamily. As to quaternary structure, homotetramer. Requires Mg(2+) as cofactor.

The protein resides in the cell inner membrane. It carries out the reaction GMP + diphosphate = guanine + 5-phospho-alpha-D-ribose 1-diphosphate. It catalyses the reaction XMP + diphosphate = xanthine + 5-phospho-alpha-D-ribose 1-diphosphate. The catalysed reaction is IMP + diphosphate = hypoxanthine + 5-phospho-alpha-D-ribose 1-diphosphate. Its pathway is purine metabolism; GMP biosynthesis via salvage pathway; GMP from guanine: step 1/1. It functions in the pathway purine metabolism; XMP biosynthesis via salvage pathway; XMP from xanthine: step 1/1. Its function is as follows. Purine salvage pathway enzyme that catalyzes the transfer of the ribosyl-5-phosphate group from 5-phospho-alpha-D-ribose 1-diphosphate (PRPP) to the N9 position of the 6-oxopurines guanine and xanthine to form the corresponding ribonucleotides GMP (guanosine 5'-monophosphate) and XMP (xanthosine 5'-monophosphate), with the release of PPi. To a lesser extent, also acts on hypoxanthine. The chain is Xanthine-guanine phosphoribosyltransferase from Nitratidesulfovibrio vulgaris (strain ATCC 29579 / DSM 644 / CCUG 34227 / NCIMB 8303 / VKM B-1760 / Hildenborough) (Desulfovibrio vulgaris).